The sequence spans 258 residues: Small ribosomal subunit protein eS1 (258 aa).

The disordered stretch occupies residues 235–258; it reads VASSGDAGSAVRRDGYEPPVQESV.

Belongs to the eukaryotic ribosomal protein eS1 family. Component of the small ribosomal subunit. Mature ribosomes consist of a small (40S) and a large (60S) subunit. The 40S subunit contains about 33 different proteins and 1 molecule of RNA (18S). The 60S subunit contains about 49 different proteins and 3 molecules of RNA (28S, 5.8S and 5S).

The protein resides in the cytoplasm. The protein is Small ribosomal subunit protein eS1 of Trichoplax adhaerens (Trichoplax reptans).